A 191-amino-acid polypeptide reads, in one-letter code: Reticulon-like protein B15 (191 aa).

The region spanning 13-191 (VADLCLWKDK…SKIPRAPKVE (179 aa)) is the Reticulon domain. 3 consecutive transmembrane segments (helical) span residues 23 to 43 (INSG…EFME), 47 to 67 (VPLL…WAKF), and 122 to 142 (VAII…YICL).

Its subcellular location is the endoplasmic reticulum membrane. This is Reticulon-like protein B15 (RTNLB15) from Arabidopsis thaliana (Mouse-ear cress).